A 152-amino-acid polypeptide reads, in one-letter code: Small ribosomal subunit protein bS16 (152 aa).

The disordered stretch occupies residues 84-152; sequence WKWEASNNPQ…EAAAEEEKSE (69 aa). A compositionally biased stretch (basic and acidic residues) spans 97 to 123; that stretch reads PGQKAKELAAEKAEKEADRKAAEEEAK. A compositionally biased stretch (low complexity) spans 124 to 144; it reads AAAAAPAAEEAPAEEAPAAEA.

Belongs to the bacterial ribosomal protein bS16 family.

This chain is Small ribosomal subunit protein bS16, found in Maricaulis maris (strain MCS10) (Caulobacter maris).